The chain runs to 534 residues: Apolipoprotein N-acyltransferase (534 aa).

7 consecutive transmembrane segments (helical) span residues 18–38 (LLAI…GFFA), 39–59 (AMFL…ASPD), 74–94 (WLFG…ALLV), 105–125 (LAIL…VALA), 127–147 (IFWS…GLME), 178–198 (VIGA…PALA), and 209–229 (ALAV…LYVA). In terms of domain architecture, CN hydrolase spans 246-496 (VQPDIDQAAK…TGFIDATVDR (251 aa)). Glu291 functions as the Proton acceptor in the catalytic mechanism. The active site involves Lys355. The Nucleophile role is filled by Cys408. The helical transmembrane segment at 504 to 524 (TFPRQTYFWLTEALLILIALV) threads the bilayer.

It belongs to the CN hydrolase family. Apolipoprotein N-acyltransferase subfamily.

It is found in the cell inner membrane. The enzyme catalyses N-terminal S-1,2-diacyl-sn-glyceryl-L-cysteinyl-[lipoprotein] + a glycerophospholipid = N-acyl-S-1,2-diacyl-sn-glyceryl-L-cysteinyl-[lipoprotein] + a 2-acyl-sn-glycero-3-phospholipid + H(+). It participates in protein modification; lipoprotein biosynthesis (N-acyl transfer). Functionally, catalyzes the phospholipid dependent N-acylation of the N-terminal cysteine of apolipoprotein, the last step in lipoprotein maturation. This chain is Apolipoprotein N-acyltransferase, found in Rhizobium leguminosarum bv. trifolii (strain WSM2304).